The sequence spans 462 residues: Trigger factor (462 aa).

Residues 172–257 (GDKATIDFVG…LKALAAPGET (86 aa)) form the PPIase FKBP-type domain. The segment at 443 to 462 (LLAADEEDEEEAAESSAALV) is disordered. Over residues 444-455 (LAADEEDEEEAA) the composition is skewed to acidic residues.

Belongs to the FKBP-type PPIase family. Tig subfamily.

It localises to the cytoplasm. It carries out the reaction [protein]-peptidylproline (omega=180) = [protein]-peptidylproline (omega=0). Functionally, involved in protein export. Acts as a chaperone by maintaining the newly synthesized protein in an open conformation. Functions as a peptidyl-prolyl cis-trans isomerase. The chain is Trigger factor from Methylocella silvestris (strain DSM 15510 / CIP 108128 / LMG 27833 / NCIMB 13906 / BL2).